The following is an 87-amino-acid chain: Toxin Cll5c (87 aa).

The signal sequence occupies residues 1–19 (MNSLLMITACLVLFGTVWA). The region spanning 20–85 (KEGYLVNKST…TYPLPNKSCS (66 aa)) is the LCN-type CS-alpha/beta domain. Disulfide bonds link Cys-31-Cys-84, Cys-35-Cys-60, Cys-44-Cys-65, and Cys-48-Cys-67. The propeptide at 86-87 (KK) is removed by a carboxypeptidase.

It belongs to the long (4 C-C) scorpion toxin superfamily. Sodium channel inhibitor family. Beta subfamily. Expressed by the venom gland.

The protein localises to the secreted. Its function is as follows. Beta toxins bind voltage-independently at site-4 of sodium channels (Nav) and shift the voltage of activation toward more negative potentials thereby affecting sodium channel activation and promoting spontaneous and repetitive firing. This is Toxin Cll5c from Centruroides limpidus (Mexican scorpion).